A 326-amino-acid polypeptide reads, in one-letter code: Biotin synthase (326 aa).

Residues 51-278 (NRVQVSRLIS…KSFVRLSAGR (228 aa)) enclose the Radical SAM core domain. Residues cysteine 66, cysteine 70, and cysteine 73 each coordinate [4Fe-4S] cluster. Cysteine 110, cysteine 141, cysteine 201, and arginine 273 together coordinate [2Fe-2S] cluster.

Belongs to the radical SAM superfamily. Biotin synthase family. As to quaternary structure, homodimer. [4Fe-4S] cluster is required as a cofactor. It depends on [2Fe-2S] cluster as a cofactor.

The catalysed reaction is (4R,5S)-dethiobiotin + (sulfur carrier)-SH + 2 reduced [2Fe-2S]-[ferredoxin] + 2 S-adenosyl-L-methionine = (sulfur carrier)-H + biotin + 2 5'-deoxyadenosine + 2 L-methionine + 2 oxidized [2Fe-2S]-[ferredoxin]. It participates in cofactor biosynthesis; biotin biosynthesis; biotin from 7,8-diaminononanoate: step 2/2. Catalyzes the conversion of dethiobiotin (DTB) to biotin by the insertion of a sulfur atom into dethiobiotin via a radical-based mechanism. The polypeptide is Biotin synthase (Paramagnetospirillum magneticum (strain ATCC 700264 / AMB-1) (Magnetospirillum magneticum)).